The sequence spans 309 residues: Acetyl-coenzyme A carboxylase carboxyl transferase subunit beta (309 aa).

Residues L27–E296 form the CoA carboxyltransferase N-terminal domain. Residues C31, C34, C50, and C53 each coordinate Zn(2+). The segment at C31 to C53 adopts a C4-type zinc-finger fold. Positions G288–Q309 are disordered.

This sequence belongs to the AccD/PCCB family. In terms of assembly, acetyl-CoA carboxylase is a heterohexamer composed of biotin carboxyl carrier protein (AccB), biotin carboxylase (AccC) and two subunits each of ACCase subunit alpha (AccA) and ACCase subunit beta (AccD). It depends on Zn(2+) as a cofactor.

The protein localises to the cytoplasm. It catalyses the reaction N(6)-carboxybiotinyl-L-lysyl-[protein] + acetyl-CoA = N(6)-biotinyl-L-lysyl-[protein] + malonyl-CoA. The protein operates within lipid metabolism; malonyl-CoA biosynthesis; malonyl-CoA from acetyl-CoA: step 1/1. Functionally, component of the acetyl coenzyme A carboxylase (ACC) complex. Biotin carboxylase (BC) catalyzes the carboxylation of biotin on its carrier protein (BCCP) and then the CO(2) group is transferred by the transcarboxylase to acetyl-CoA to form malonyl-CoA. The chain is Acetyl-coenzyme A carboxylase carboxyl transferase subunit beta from Marinobacter nauticus (strain ATCC 700491 / DSM 11845 / VT8) (Marinobacter aquaeolei).